Consider the following 368-residue polypeptide: Probable multidrug ABC transporter permease YbhR (368 aa).

The Cytoplasmic portion of the chain corresponds to methionine 1–alanine 24. The helical transmembrane segment at isoleucine 25–valine 45 threads the bilayer. Topologically, residues threonine 46 to tryptophan 173 are periplasmic. In terms of domain architecture, ABC transmembrane type-2 spans alanine 129–lysine 366. The helical transmembrane segment at phenylalanine 174–leucine 194 threads the bilayer. Residues serine 195–lysine 222 are Cytoplasmic-facing. The helical transmembrane segment at alanine 223–tryptophan 243 threads the bilayer. At alanine 244–leucine 253 the chain is on the periplasmic side. A helical transmembrane segment spans residues alanine 254–isoleucine 274. Residues serine 275–alanine 284 lie on the Cytoplasmic side of the membrane. The helical transmembrane segment at phenylalanine 285–valine 305 threads the bilayer. Over glutamate 306–aspartate 339 the chain is Periplasmic. The helical transmembrane segment at isoleucine 340 to tyrosine 360 threads the bilayer. The Cytoplasmic segment spans residues alanine 361–methionine 368.

This sequence belongs to the ABC-2 integral membrane protein family. The complex is probably composed of two ATP-binding proteins (YbhF) and two transmembrane proteins (YbhR and YbhS).

The protein localises to the cell inner membrane. In terms of biological role, part of the ABC transporter complex YbhFSR that could be involved in efflux of cefoperazone. Probably involved in the translocation of the substrate across the membrane. This Escherichia coli O157:H7 protein is Probable multidrug ABC transporter permease YbhR (ybhR).